A 129-amino-acid polypeptide reads, in one-letter code: MDDSVASMCVDNAFAYTTDDLLKNIPFSHSKCAPFKLQNYTVLKRLSNGFIDKYVDVCSISELQKFNFKIDRLTNYISNIFEYEFVVLEHDLSTVHVINAETKTKLGHINVSLNQNDANVLILTVTLTS.

This is an uncharacterized protein from Lepidoptera (butterflies and moths).